The following is a 549-amino-acid chain: Hydroxylamine reductase (549 aa).

The [4Fe-4S] cluster site is built by Cys-5, Cys-8, Cys-17, and Cys-23. His-243, Glu-267, Cys-311, Cys-403, Cys-431, Cys-456, Glu-491, and Lys-493 together coordinate hybrid [4Fe-2O-2S] cluster. Position 403 is a cysteine persulfide (Cys-403).

It belongs to the HCP family. [4Fe-4S] cluster serves as cofactor. Hybrid [4Fe-2O-2S] cluster is required as a cofactor.

It localises to the cytoplasm. The catalysed reaction is A + NH4(+) + H2O = hydroxylamine + AH2 + H(+). Catalyzes the reduction of hydroxylamine to form NH(3) and H(2)O. This chain is Hydroxylamine reductase, found in Desulfitobacterium hafniense (strain DSM 10664 / DCB-2).